A 310-amino-acid polypeptide reads, in one-letter code: Olfactory receptor 10G2 (310 aa).

The Extracellular segment spans residues 1-29; that stretch reads MGKTKNTSLDAVVTDFILLGLSHPPNLRS. Asn6 is a glycosylation site (N-linked (GlcNAc...) asparagine). A helical transmembrane segment spans residues 30-50; that stretch reads LLFLVFFIIYILTQLGNLLIL. The Cytoplasmic portion of the chain corresponds to 51-58; it reads LTMWADPK. A helical membrane pass occupies residues 59-80; it reads LCARPMYILLGVLSFLDMWLSS. The Extracellular portion of the chain corresponds to 81-104; that stretch reads VTVPLLILDFTPSIKAIPFGGCVA. Residues Cys102 and Cys194 are joined by a disulfide bond. A helical transmembrane segment spans residues 105–125; that stretch reads QLYFFHFLGSTQCFLYTLMAY. At 126-144 the chain is on the cytoplasmic side; sequence DRYLAICQPLRYPVLMNGR. The chain crosses the membrane as a helical span at residues 145-165; it reads LCTVLVAGAWVAGSMHGSIQA. Over 166–202 the chain is Extracellular; that stretch reads TLTFRLPYCGPNQVDYFICDIPAVLRLACADTTVNEL. A helical transmembrane segment spans residues 203–222; that stretch reads VTFVDVGVVAASCFMLILLS. The Cytoplasmic portion of the chain corresponds to 223 to 242; that stretch reads YANIVNAILKIRTTDGRRRA. A helical membrane pass occupies residues 243–263; the sequence is FSTCGSHLIVVTVYYVPCIFI. Residues 264 to 274 are Extracellular-facing; the sequence is YLRAGSKDPLD. A helical membrane pass occupies residues 275-295; it reads GAAAVFYTVVTPLLNPLIYTL. The Cytoplasmic portion of the chain corresponds to 296–310; it reads RNQEVKSALKRITAG.

Belongs to the G-protein coupled receptor 1 family.

The protein localises to the cell membrane. In terms of biological role, odorant receptor. The polypeptide is Olfactory receptor 10G2 (OR10G2) (Homo sapiens (Human)).